A 126-amino-acid chain; its full sequence is Aspartate 1-decarboxylase (126 aa).

Ser25 (schiff-base intermediate with substrate; via pyruvic acid) is an active-site residue. Ser25 carries the pyruvic acid (Ser) modification. Thr57 contributes to the substrate binding site. Tyr58 serves as the catalytic Proton donor. 73–75 (GAA) is a substrate binding site.

Belongs to the PanD family. Heterooctamer of four alpha and four beta subunits. The cofactor is pyruvate. In terms of processing, is synthesized initially as an inactive proenzyme, which is activated by self-cleavage at a specific serine bond to produce a beta-subunit with a hydroxyl group at its C-terminus and an alpha-subunit with a pyruvoyl group at its N-terminus.

The protein localises to the cytoplasm. The catalysed reaction is L-aspartate + H(+) = beta-alanine + CO2. Its pathway is cofactor biosynthesis; (R)-pantothenate biosynthesis; beta-alanine from L-aspartate: step 1/1. Its function is as follows. Catalyzes the pyruvoyl-dependent decarboxylation of aspartate to produce beta-alanine. This Cronobacter sakazakii (strain ATCC BAA-894) (Enterobacter sakazakii) protein is Aspartate 1-decarboxylase.